Reading from the N-terminus, the 662-residue chain is Acetyl-coenzyme A synthetase (662 aa).

CoA is bound by residues 197–200 (RKGK) and T317. ATP contacts are provided by residues 393 to 395 (GEP), 417 to 422 (DTWWQT), D510, and R525. S533 lines the CoA pocket. R536 serves as a coordination point for ATP. Mg(2+) is bound by residues H549 and V552. The residue at position 623 (K623) is an N6-acetyllysine.

Belongs to the ATP-dependent AMP-binding enzyme family. The cofactor is Mg(2+). Acetylated. Deacetylation by the SIR2-homolog deacetylase activates the enzyme.

It catalyses the reaction acetate + ATP + CoA = acetyl-CoA + AMP + diphosphate. Its function is as follows. Catalyzes the conversion of acetate into acetyl-CoA (AcCoA), an essential intermediate at the junction of anabolic and catabolic pathways. AcsA undergoes a two-step reaction. In the first half reaction, AcsA combines acetate with ATP to form acetyl-adenylate (AcAMP) intermediate. In the second half reaction, it can then transfer the acetyl group from AcAMP to the sulfhydryl group of CoA, forming the product AcCoA. In Helicobacter pylori (strain P12), this protein is Acetyl-coenzyme A synthetase.